The chain runs to 184 residues: Thymidine kinase (184 aa).

Residues 10 to 17 (GPMYSGKT), histidine 53, and 83 to 86 (DEVQ) each bind ATP. The active-site Proton acceptor is the glutamate 84. Residue histidine 115 coordinates substrate. The Zn(2+) site is built by cysteine 140 and cysteine 143. Substrate-binding positions include 161 to 164 (IDVG) and tyrosine 169. The Zn(2+) site is built by cysteine 173 and cysteine 176.

The protein belongs to the thymidine kinase family. As to quaternary structure, homotetramer.

The protein localises to the cytoplasm. It catalyses the reaction thymidine + ATP = dTMP + ADP + H(+). This is Thymidine kinase (tdk) from Thermotoga maritima (strain ATCC 43589 / DSM 3109 / JCM 10099 / NBRC 100826 / MSB8).